Consider the following 347-residue polypeptide: Isocitrate dehydrogenase [NAD] subunit alpha, mitochondrial (347 aa).

The N-terminal 8 residues, 1 to 8 (QKQVTRGF), are a transit peptide targeting the mitochondrion. 14–42 (TVTLIPGDGIGPEISAAVMKIFDAAKAPI) is an NAD(+) binding site. Lysine 58 bears the N6-succinyllysine mark. The residue at position 82 (threonine 82) is a Phosphothreonine. Residues arginine 96, arginine 106, and arginine 127 each coordinate substrate. The residue at position 204 (lysine 204) is an N6-acetyllysine. 3 residues coordinate Mg(2+): aspartate 214, aspartate 238, and aspartate 242. Lysine 324 is subject to N6-acetyllysine; alternate. N6-succinyllysine; alternate is present on lysine 324. N6-succinyllysine is present on lysine 331.

Belongs to the isocitrate and isopropylmalate dehydrogenases family. In terms of assembly, heterooligomer of subunits alpha (IDH3A), beta (IDH3B), and gamma (IDH3G) in the apparent ratio of 2:1:1. The heterodimer containing one IDH3A and one IDH3B subunit and the heterodimer containing one IDH3A and one IDH3G subunit assemble into a heterotetramer (which contains two subunits of IDH3A, one of IDH3B and one of IDH3G) and further into the heterooctamer. Requires Mg(2+) as cofactor. It depends on Mn(2+) as a cofactor.

It localises to the mitochondrion. The enzyme catalyses D-threo-isocitrate + NAD(+) = 2-oxoglutarate + CO2 + NADH. With respect to regulation, the heterotetramer and the heterodimer composed of IDH3A and IDH3G subunits can be allosterically activated by citrate (CIT) or/and ADP, and the two activators can act independently or synergistically. The heterodimer composed of IDH3A and IDH3B subunits cannot be allosterically regulated and the allosteric regulation of the heterotetramer is through the IDH3G subunit and not the IDH3B subunit. The IDH3G subunit contains the allosteric site which consists of a CIT-binding site and an ADP-binding site, and the binding of CIT and ADP causes conformational changes at the allosteric site which are transmitted to the active site in the catalytic subunit (IDH3A) through a cascade of conformational changes at the heterodimer interface, leading to stabilization of the isocitrate-binding at the active site and thus activation of the enzyme. ATP can activate the heterotetramer and the heterodimer composed of IDH3A and IDH3G subunits at low concentrations but inhibits their activities at high concentrations, whereas ATP exhibits only inhibitory effect on the heterodimer composed of IDH3A and IDH3B subunits. Its function is as follows. Catalytic subunit of the enzyme which catalyzes the decarboxylation of isocitrate (ICT) into alpha-ketoglutarate. The heterodimer composed of the alpha (IDH3A) and beta (IDH3B) subunits and the heterodimer composed of the alpha (IDH3A) and gamma (IDH3G) subunits, have considerable basal activity but the full activity of the heterotetramer (containing two subunits of IDH3A, one of IDH3B and one of IDH3G) requires the assembly and cooperative function of both heterodimers. In Macaca fascicularis (Crab-eating macaque), this protein is Isocitrate dehydrogenase [NAD] subunit alpha, mitochondrial (IDH3A).